The chain runs to 314 residues: tRNA dimethylallyltransferase (314 aa).

Residue 12–19 (GPTASGKT) coordinates ATP. A substrate-binding site is contributed by 14–19 (TASGKT). Interaction with substrate tRNA stretches follow at residues 37-40 (DSAL), 161-165 (QRIQR), and 244-249 (RCVGYR).

This sequence belongs to the IPP transferase family. Monomer. The cofactor is Mg(2+).

The enzyme catalyses adenosine(37) in tRNA + dimethylallyl diphosphate = N(6)-dimethylallyladenosine(37) in tRNA + diphosphate. Functionally, catalyzes the transfer of a dimethylallyl group onto the adenine at position 37 in tRNAs that read codons beginning with uridine, leading to the formation of N6-(dimethylallyl)adenosine (i(6)A). This Janthinobacterium sp. (strain Marseille) (Minibacterium massiliensis) protein is tRNA dimethylallyltransferase.